A 278-amino-acid chain; its full sequence is Undecaprenyl-diphosphatase (278 aa).

The next 8 helical transmembrane spans lie at 14–34, 40–60, 89–109, 121–141, 153–173, 196–216, 227–247, and 257–277; these read GTTE…PWLF, GLAF…AYFW, WAVI…NDVI, TAIV…WLAE, LGLR…LPGV, FSFI…TLKL, VLFV…IAFL, and SIFI…VSFA.

The protein belongs to the UppP family.

It is found in the cell membrane. It catalyses the reaction di-trans,octa-cis-undecaprenyl diphosphate + H2O = di-trans,octa-cis-undecaprenyl phosphate + phosphate + H(+). Catalyzes the dephosphorylation of undecaprenyl diphosphate (UPP). Confers resistance to bacitracin. The polypeptide is Undecaprenyl-diphosphatase (Thermomicrobium roseum (strain ATCC 27502 / DSM 5159 / P-2)).